Consider the following 83-residue polypeptide: Short neurotoxin VAN-29 (83 aa).

The N-terminal stretch at 1 to 21 (MKTLLLTLVVVTIVCLDLGYT) is a signal peptide. 4 cysteine pairs are disulfide-bonded: Cys-24–Cys-45, Cys-38–Cys-62, Cys-64–Cys-75, and Cys-76–Cys-81.

Belongs to the three-finger toxin family. Short-chain subfamily. Type I alpha-neurotoxin sub-subfamily. As to expression, expressed by the venom gland.

It is found in the secreted. Its function is as follows. Binds to muscle nicotinic acetylcholine receptor (nAChR) and inhibit acetylcholine from binding to the receptor, thereby impairing neuromuscular transmission. This chain is Short neurotoxin VAN-29, found in Laticauda laticaudata (Blue-ringed sea krait).